A 121-amino-acid polypeptide reads, in one-letter code: Large ribosomal subunit protein bL12 (121 aa).

Belongs to the bacterial ribosomal protein bL12 family. In terms of assembly, homodimer. Part of the ribosomal stalk of the 50S ribosomal subunit. Forms a multimeric L10(L12)X complex, where L10 forms an elongated spine to which 2 to 4 L12 dimers bind in a sequential fashion. Binds GTP-bound translation factors.

Its function is as follows. Forms part of the ribosomal stalk which helps the ribosome interact with GTP-bound translation factors. Is thus essential for accurate translation. This is Large ribosomal subunit protein bL12 from Lactococcus lactis subsp. lactis (strain IL1403) (Streptococcus lactis).